The following is a 366-amino-acid chain: NADP-dependent isopropanol dehydrogenase (366 aa).

The Zn(2+) site is built by C43, H65, E66, and D156. Residues 181–184 (IGPV), 204–206 (GSR), Y224, 271–273 (VNY), and K346 each bind NADP(+).

Belongs to the zinc-containing alcohol dehydrogenase family. As to quaternary structure, homodimer. It depends on Zn(2+) as a cofactor.

The protein localises to the cytoplasm. The enzyme catalyses propan-2-ol + NADP(+) = acetone + NADPH + H(+). Functionally, alcohol dehydrogenase with a preference for medium chain secondary alcohols, such as 2-butanol and isopropanol. Has very low activity with primary alcohols, such as ethanol. Under physiological conditions, the enzyme reduces aldehydes and 2-ketones to produce secondary alcohols. Is also active with acetaldehyde and propionaldehyde. The polypeptide is NADP-dependent isopropanol dehydrogenase (Entamoeba histolytica (strain ATCC 30459 / HM-1:IMSS / ABRM)).